The chain runs to 180 residues: Chromosome-anchoring protein RacA (180 aa).

Positions Thr5 to Gln25 form a DNA-binding region, H-T-H motif. The stretch at His90 to Glu150 forms a coiled coil.

Belongs to the RacA family.

It is found in the cytoplasm. Required for the formation of axial filaments and for anchoring the origin regions at the cell poles in sporulating cells, thus ensuring proper chromosome segregation in the prespore. Binds in a dispersed manner throughout the chromosome but preferentially to sites clustered in the origin portion of the chromosome, causing condensation of the chromosome and its remodeling into an elongated, anchored structure. The protein is Chromosome-anchoring protein RacA of Bacillus anthracis (strain A0248).